The primary structure comprises 346 residues: tRNA/tmRNA (uracil-C(5))-methyltransferase (346 aa).

Gln-168, Tyr-197, Asn-202, Glu-218, and Asp-278 together coordinate S-adenosyl-L-methionine. Cys-303 functions as the Nucleophile in the catalytic mechanism. The active-site Proton acceptor is Glu-337.

The protein belongs to the class I-like SAM-binding methyltransferase superfamily. RNA M5U methyltransferase family. TrmA subfamily.

The catalysed reaction is uridine(54) in tRNA + S-adenosyl-L-methionine = 5-methyluridine(54) in tRNA + S-adenosyl-L-homocysteine + H(+). It carries out the reaction uridine(341) in tmRNA + S-adenosyl-L-methionine = 5-methyluridine(341) in tmRNA + S-adenosyl-L-homocysteine + H(+). Dual-specificity methyltransferase that catalyzes the formation of 5-methyluridine at position 54 (m5U54) in all tRNAs, and that of position 341 (m5U341) in tmRNA (transfer-mRNA). The chain is tRNA/tmRNA (uracil-C(5))-methyltransferase from Campylobacter lari (strain RM2100 / D67 / ATCC BAA-1060).